The following is a 257-amino-acid chain: Global transcriptional regulator CodY (257 aa).

A GAF domain region spans residues 1-155; the sequence is MSLLSKTREL…AATVIGMEIL (155 aa). A DNA-binding region (H-T-H motif) is located at residues 203-222; it reads ASKVADRVGITRSVIVNALR.

Belongs to the CodY family.

It is found in the cytoplasm. Its function is as follows. DNA-binding global transcriptional regulator which is involved in the adaptive response to starvation and acts by directly or indirectly controlling the expression of numerous genes in response to nutrient availability. During rapid exponential growth, CodY is highly active and represses genes whose products allow adaptation to nutrient depletion. The polypeptide is Global transcriptional regulator CodY (Staphylococcus haemolyticus (strain JCSC1435)).